Consider the following 343-residue polypeptide: MIKELQGGNMATKFKTDEEMRGDRLTQCLDDIMRASTEMMVQQQLKTIQLNSDVAAGFRKALSKSLGDRVRAFHSILDGVETTLTTASQYLDAVEEAAVKMKQWKQQQEEEQRRKHQAELEKNKRQQEHDAATKAAAAQQLMAQQSPVDLTAPTPTGLASNLDKSNRVGGVKPFSAEFGHLDEMDLSMFGGIDGHGDFSLEDFNMGGNSVPLNGGRPRNMVMADAGGFPARGGMGRGGATAINNGAQEIKTSTNEASTNNRNNDGTGGASNPRISSNYNSAVADHESIGLRVDANGQNTKQSGQQSGAGLNPDDYLTLNDFNDLGIDWNTGENNELDLNDFNI.

2 disordered regions span residues 105-141 and 252-277; these read KQQQEEEQRRKHQAELEKNKRQQEHDAATKAAAAQQL and STNEASTNNRNNDGTGGASNPRISSN. Positions 107-132 are enriched in basic and acidic residues; sequence QQEEEQRRKHQAELEKNKRQQEHDAA. A compositionally biased stretch (polar residues) spans 252 to 264; that stretch reads STNEASTNNRNND.

This sequence belongs to the Mediator complex subunit 2 family. In terms of assembly, component of the Mediator complex.

It localises to the nucleus. Its function is as follows. Component of the Mediator complex, a coactivator involved in the regulated transcription of nearly all RNA polymerase II-dependent genes. Mediator functions as a bridge to convey information from gene-specific regulatory proteins to the basal RNA polymerase II transcription machinery. Mediator is recruited to promoters by direct interactions with regulatory proteins and serves as a scaffold for the assembly of a functional preinitiation complex with RNA polymerase II and the general transcription factors. The protein is Mediator of RNA polymerase II transcription subunit 2 (MED2) of Eremothecium gossypii (strain ATCC 10895 / CBS 109.51 / FGSC 9923 / NRRL Y-1056) (Yeast).